The primary structure comprises 673 residues: MKIGKTLWRYALLYRKLLITAVLLLTVAVGAELTGPFIGKKMIDDHILGIEKTWYEAAEKDKNAVQFHGVSYVREDRLQEPVSKAKEAHIYQVGMAFYFVDQAVSFDGNRTVSDGKLTITNGDKSRAYAAEKLTKQELFQFYQPEIKGMVLLICLYGGLLVFSVFFQYGQHYLLQMSANRIIQKMRQDVFSHIQKMPIRYFDNLPAGKVVARITNDTEAIRDLYVTVLSTFVTSGIYMFGIFTALFLLDVKLAFVCLAIVPIIWLWSVIYRRYASYYNQKIRSINSDINAKMNESIQGMTIIQAFRHQKETMREFEELNESHFYFQNRMLNLNSLMSHNLVNVIRNLAFVCLIWHFGGASLNAAGIVSIGVLYAFVDYLNRLFQPITGIVNQFSKLELARVSAGRVFELLEEKNTEEAGEPAKERALGRVEFRDVSFAYQEGEEVLKHISFTAQKGETVALVGHTGSGKSSILNLLFRFYDAQKGDVLIDGKSIYNMSRQELRSHMGIVLQDPYLFSGTIGSNVSLDDERMTEEEIKNALRQVGAEPLLKKLPKGINEPVIEKGSTLSSGERQLISFARALAFDPAILILDEATAHIDTETEAVIQKALDVVKQGRTTFVIAHRLSTIRNADQILVLDKGEIVERGNHEELMALEGQYYQMYELQKGQKHSIA.

Transmembrane regions (helical) follow at residues 18 to 38, 146 to 166, 223 to 243, 245 to 265, and 347 to 367; these read LITA…GPFI, IKGM…SVFF, LYVT…GIFT, LFLL…IIWL, and LAFV…AGIV. Residues 18 to 398 form the ABC transmembrane type-1 domain; the sequence is LITAVLLLTV…IVNQFSKLEL (381 aa). The ABC transporter domain maps to 430–664; it reads VEFRDVSFAY…EGQYYQMYEL (235 aa). An ATP-binding site is contributed by 463 to 470; it reads GHTGSGKS.

The protein belongs to the ABC transporter superfamily. Heterodimer composed of YheH and YheI.

Its subcellular location is the cell membrane. Its activity is regulated as follows. Inhibited by ortho-vanadate. Its function is as follows. Involved in the transport of four structurally unrelated drugs, including doxorubicin and mitoxantrone. Transmembrane domains (TMD) form a pore in the membrane and the ATP-binding domain (NBD) is responsible for energy generation. The sequence is that of Probable multidrug resistance ABC transporter ATP-binding/permease protein YheH (yheH) from Bacillus subtilis (strain 168).